The chain runs to 183 residues: Peptide deformylase (183 aa).

Residues C110 and H153 each contribute to the Fe cation site. E154 is an active-site residue. H157 contacts Fe cation.

It belongs to the polypeptide deformylase family. Requires Fe(2+) as cofactor.

The enzyme catalyses N-terminal N-formyl-L-methionyl-[peptide] + H2O = N-terminal L-methionyl-[peptide] + formate. Its function is as follows. Removes the formyl group from the N-terminal Met of newly synthesized proteins. Requires at least a dipeptide for an efficient rate of reaction. N-terminal L-methionine is a prerequisite for activity but the enzyme has broad specificity at other positions. This Shouchella clausii (strain KSM-K16) (Alkalihalobacillus clausii) protein is Peptide deformylase.